The primary structure comprises 258 residues: ATP synthase subunit a (258 aa).

6 helical membrane passes run 30–50 (SSYFMVLTTVLTIVLFMVAMS), 85–105 (FFPFVFTLFIFILVANMLGMF), 122–142 (LIVTVALAMLVWLTVIIYGVF), 151–171 (LFVPSGVPIFVLPLVVVIEII), 198–218 (FAGFVVTLAAAWGGFGYLAGI), and 230–250 (LEFLVAFLQAYVFAMLTCIYL).

The protein belongs to the ATPase A chain family. In terms of assembly, F-type ATPases have 2 components, CF(1) - the catalytic core - and CF(0) - the membrane proton channel. CF(1) has five subunits: alpha(3), beta(3), gamma(1), delta(1), epsilon(1). CF(0) has three main subunits: a(1), b(2) and c(9-12). The alpha and beta chains form an alternating ring which encloses part of the gamma chain. CF(1) is attached to CF(0) by a central stalk formed by the gamma and epsilon chains, while a peripheral stalk is formed by the delta and b chains.

The protein resides in the cell inner membrane. Functionally, key component of the proton channel; it plays a direct role in the translocation of protons across the membrane. The protein is ATP synthase subunit a of Maricaulis maris (strain MCS10) (Caulobacter maris).